A 347-amino-acid polypeptide reads, in one-letter code: Monopolin complex subunit LRS4 (347 aa).

A coiled-coil region spans residues 46–118; that stretch reads KKVVDETLFL…QISVDKHNKE (73 aa). The span at 112–130 shows a compositional bias: basic and acidic residues; the sequence is VDKHNKERTPSTGRDEQQR. 2 disordered regions span residues 112–183 and 208–230; these read VDKH…SLLS and RNDT…LQKS. 2 stretches are compositionally biased toward polar residues: residues 131 to 140 and 155 to 172; these read NSKAAHTSKP and NNQT…PTSQ. A phosphoserine mark is found at S168 and S230.

As to quaternary structure, component of the monopolin complex composed of at least CSM1, LRS4 and MAM1. The complex associates with the kinetochore. In terms of processing, phosphorylated by CDC5. This phosphorylation is required for the location to the kinetochores during late pachytene.

Its subcellular location is the nucleus. It localises to the nucleolus. It is found in the chromosome. The protein resides in the centromere. Component of the monopolin complex which promotes monoorientation during meiosis I, required for chromosome segregation during meiosis. Involved in rDNA silencing. This Saccharomyces cerevisiae (strain ATCC 204508 / S288c) (Baker's yeast) protein is Monopolin complex subunit LRS4 (LRS4).